The chain runs to 476 residues: MAQENTQVNAGVQGKIVQCIGAVVDVEFPRDQMPKVYDALKLEGSPLTLEVQQQLGDGVVRTIALGSSDGLRRGLMVSNTGNPITVPVGKATLGRIMDVLGSPIDERGPVSQELTASIHRKAPAYDELSPSQELLETGIKVIDLVCPFAKGGKVGLFGGAGVGKTVNMMELINNIAKAHSGLSVFAGVGERTREGNDFYHEMADSGVVNLEKLEDSKVAMVYGQMNEPPGNRLRVALTGLTIAESFRDEGRDVLFFVDNIYRYTLAGTEVSALLGRMPSAVGYQPTLAEEMGRLQERITSTKVGSITSIQAVYVPADDLTDPSPATTFAHLDSTVVLSRDIASLGIYPAVDPLDSTSRQLDPQVVGEEHYQVARGVQGTLQRYKELRDIIAILGMDELAPEDKLAVARARKIQRFLSQPFHVAEVFTGSPGKYVPLAETIRGFKMIVAGECDHLPEQAFYMVGTIDEAFEKAKKVA.

ATP is bound at residue 158 to 165 (GGAGVGKT).

This sequence belongs to the ATPase alpha/beta chains family. In terms of assembly, F-type ATPases have 2 components, CF(1) - the catalytic core - and CF(0) - the membrane proton channel. CF(1) has five subunits: alpha(3), beta(3), gamma(1), delta(1), epsilon(1). CF(0) has three main subunits: a(1), b(2) and c(9-12). The alpha and beta chains form an alternating ring which encloses part of the gamma chain. CF(1) is attached to CF(0) by a central stalk formed by the gamma and epsilon chains, while a peripheral stalk is formed by the delta and b chains.

Its subcellular location is the cell inner membrane. It carries out the reaction ATP + H2O + 4 H(+)(in) = ADP + phosphate + 5 H(+)(out). Functionally, produces ATP from ADP in the presence of a proton gradient across the membrane. The catalytic sites are hosted primarily by the beta subunits. This Paracidovorax citrulli (strain AAC00-1) (Acidovorax citrulli) protein is ATP synthase subunit beta.